Consider the following 241-residue polypeptide: MMKIKIIFSYDGSAFLGSATQPHKKGVQDALSGALSHLGIFSPLLMASRTDKGVHASYAVASVECGDYFTNLEYLQKQLNKFSHPFIHIKKIEKVKDDFEVRFDVKSREYRYIFSHASYSPFMASYVHFYPKFDLGKANELLGFFVGKKDLKFFCKSGGDNKTTLREIFIARAYAYKDFSIFHFKANGFLRGQIRLSVASVLKVLEGKMSEKELKEQIEAKKQYNHFLAPPNGLYLSRICY.

Catalysis depends on Asp51, which acts as the Nucleophile. Tyr110 lines the substrate pocket.

The protein belongs to the tRNA pseudouridine synthase TruA family. Homodimer.

It carries out the reaction uridine(38/39/40) in tRNA = pseudouridine(38/39/40) in tRNA. In terms of biological role, formation of pseudouridine at positions 38, 39 and 40 in the anticodon stem and loop of transfer RNAs. In Campylobacter jejuni subsp. jejuni serotype O:2 (strain ATCC 700819 / NCTC 11168), this protein is tRNA pseudouridine synthase A.